We begin with the raw amino-acid sequence, 501 residues long: Sarpagan bridge enzyme (501 aa).

The chain crosses the membrane as a helical; Signal-anchor for type II membrane protein span at residues 3-23 (VMQLSFSYPALFLFVFFLFML). C441 is a binding site for heme.

This sequence belongs to the cytochrome P450 family. Heme serves as cofactor. As to expression, highly expressed in roots. Expressed at low levels in stems.

It localises to the endoplasmic reticulum membrane. The enzyme catalyses (19E)-geissoschizine + reduced [NADPH--hemoprotein reductase] + O2 = polyneuridine aldehyde + oxidized [NADPH--hemoprotein reductase] + 2 H2O + H(+). It catalyses the reaction tetrahydroalstonine + A + reduced [NADPH--hemoprotein reductase] + O2 = alstonine + AH2 + oxidized [NADPH--hemoprotein reductase] + 2 H2O + H(+). The catalysed reaction is ajmalicine + A + reduced [NADPH--hemoprotein reductase] + O2 = serpentine + AH2 + oxidized [NADPH--hemoprotein reductase] + 2 H2O + H(+). The protein operates within alkaloid biosynthesis; ajmaline biosynthesis. Monooxygenase involved in the biosynthesis of ajmaline-type monoterpenoid indole alkaloids (MIAs) natural products, important plant-derived pharmaceuticals used in the therapy of heart disorders. Converts by cyclization the strictosidine-derived geissoschizine to the sarpagan alkaloid polyneuridine aldehyde, precursor of vomilenine, an intermediate chemical in the biosynthesis of ajmaline. Converts by aromatization the tetrahydro-beta-carboline alkaloids tetrahydroalstonine and ajmalicine to the corresponding beta-carboline alkaloids alstonine and serpentine, respectively. The sequence is that of Sarpagan bridge enzyme from Gelsemium sempervirens (Carolina jasmine).